The primary structure comprises 1722 residues: MGTRRVTPGCAAGLLVLLLRCFGLAEPSEFSGDDSFTIVNENTGKCIQPLSDWIVAQDCSETRSMLWKWVSQHRLFHLESQKCLGLDMTKAADNLRMFRCDSSVLLWWKCEHHSLYSAAHYRLDLKDGYATASTNSSAVWKKGGSKENLCDQPYREIYTRDGNSYGRPCEFPFLVGETWHHDCIRDENHSGPWCATTLNYEYDQKWGICLKPESGCEGNWEKNEQIGSCYQFNNQEVLSWKEAYVSCQNQGADLLSIHSAAELAYITGKEDIARIVWIGLNQLYSARGWEWSDFKPLKFLNWDPGTPSAPMIGGSSCARMDTETGLWRSVSCEAQQPYVCKKPLNNTVELPDVWTYSDTHCDVGWLPQNGFCYLLANESGPWDAAHLKCKAFGGDLISIHSLADVEVVVTKLHSGDVKEEIWTGLRNVNSPTLFQWSDGTEVTLTYWNENEPSVPYNKTPNCVSYLGKLGQWKVQSCEKKLRYVCKKKGEITNDTRSDKLCPPDEGWKRHGETCYKIYENEVPFGTNCNLTITSRFEQEFLNDMMKKYDKSFQKYFWTGLRDADARGEYSWAATGGLKQAMTFSNWNFLQPASPGGCVAMSTGKTLGRWEVKSCRSFRALSICKKMSGPQEPEEATPKPDEPCPEGWHTFPSNLSCYKVFHIERTVRRRTWEEAERFCQALGAHLPSFSHMNEVKEFLHLLQDQFSVQRWLWIGLNKRSPDLQGSWQWSDRTPVSTVIMHREFQQDYDVRDCAAIKVLDNAWLRTWYYYDERKFGYLKPFSCDAKLDWVCQIPKGSTLQVPDWYNPERTGIHGPPVIIDGSEYWFVEEPRLNYEEAVLYCASNHSFLATITTFTKLKAIRGKMENLSGEEQKWWVKANANPIDHYFLRTRPLWHRFSMLLDEECLQMSAKMWHLDLNKRADCNDKLPFVCEKYNVSSLEKYSPDSAAKVQCTGKWIPFQNKCFLKVKSEPVTFSQASSTCHTYGGTLPSVLSKSEQDFIISLLPEMETSLWIGLRWTAYDRISKWTDGRNLTYSNFHPLLVGRRLSIAAYFIDEESHYHCALMLNLRKSPLTGTWNFTSCSERHSLSLCQKYSENEDGRPWETNSETVKYLNNLYKIISKPLTWHGALKECLNENMRLVSITDPYQQAFLSVQATLRNTSFWIGLSSQDDELNFGWSDGTYLHFSNWAVDNEKLDDCVILDTDGFWKTADCDENQPGAICYYPGNETSKEVRPLNSAKCPSPAQSTPWVPFQNSCYNFMITKNRHRTITQKEVHSLCQKLHSKAQILSIRNEEENNFVVEQLLYFNYIASWVMLGVTYENNSLMWFDKTALSYTHWRAGRPAVKNHKFLAGLSTDGFWDIQSFNVIDETLHFYQHSILACKIEMVDYKEERNSTLPEFIPYEDGVYNVIQKRVTWYQALSMCSQSGRHLASVHNPKEQLFLEDIVNRDGFPLWVGLSSHDGSESSFEWSDGSAFDYIPWKSQGSPGNCVILDPKGTWKHENCLSVKDGAICYKPTKFKELASHAHSSKCPLVKRNGSQWVQYGDHCYSAEQALHTFAEAKKLCQELDHSATVVTIADENENKFVSRLMRENYNITMRVWLGLSQHSLDQSWSWLDGLDVTFVKWENKSKNGDGKCSILIASNETWKKVECSRGYARVVCKVPLSPDYRGIAVLFAVLSVLALISGLIWFLVQRNHFRWTGLSSVRYEHGANEDEVMLPSFHD.

The N-terminal stretch at 1-27 is a signal peptide; the sequence is MGTRRVTPGCAAGLLVLLLRCFGLAEP. The Extracellular portion of the chain corresponds to 28-1666; the sequence is SEFSGDDSFT…VVCKVPLSPD (1639 aa). Positions 32-182 constitute a Ricin B-type lectin domain; that stretch reads GDDSFTIVNE…FLVGETWHHD (151 aa). An N-linked (GlcNAc...) asparagine glycan is attached at Asn135. Residues 164-211 form the Fibronectin type-II domain; sequence SYGRPCEFPFLVGETWHHDCIRDENHSGPWCATTLNYEYDQKWGICLK. 4 disulfides stabilise this stretch: Cys169/Cys194, Cys183/Cys209, Cys247/Cys340, and Cys317/Cys332. A C-type lectin 1 domain is found at 225–341; sequence QIGSCYQFNN…CEAQQPYVCK (117 aa). 2 N-linked (GlcNAc...) asparagine glycosylation sites follow: Asn345 and Asn377. 3 consecutive C-type lectin domains span residues 368 to 486, 493 to 625, and 652 to 791; these read QNGF…YVCK, NDTR…ICKK, and SNLS…WVCQ. 2 disulfide bridges follow: Cys389-Cys485 and Cys462-Cys477. The N-linked (GlcNAc...) asparagine glycan is linked to Asn529. 3 cysteine pairs are disulfide-bonded: Cys597–Cys614, Cys678–Cys790, and Cys752–Cys782. Residues Asn843 and Asn865 are each glycosylated (N-linked (GlcNAc...) asparagine). Tyr933 carries the post-translational modification Phosphotyrosine. Residues Asn934 and Asn1076 are each glycosylated (N-linked (GlcNAc...) asparagine). 2 consecutive C-type lectin domains span residues 958 to 1091 and 1110 to 1222; these read FQNK…LCQK and YLNN…ICYY. 2 cysteine pairs are disulfide-bonded: Cys1060–Cys1080 and Cys1197–Cys1211. N-linked (GlcNAc...) asparagine glycosylation is found at Asn1225, Asn1320, and Asn1392. The C-type lectin 7 domain occupies 1251–1374; sequence FQNSCYNFMI…VIDETLHFYQ (124 aa). C-type lectin domains follow at residues 1401-1513 and 1542-1661; these read YEDG…ICYK and YGDH…VCKV. Cys1488 and Cys1502 are disulfide-bonded. 2 N-linked (GlcNAc...) asparagine glycosylation sites follow: Asn1593 and Asn1626. Cys1635 and Cys1650 are oxidised to a cystine. A helical membrane pass occupies residues 1667–1691; it reads YRGIAVLFAVLSVLALISGLIWFLV. Topologically, residues 1692–1722 are cytoplasmic; sequence QRNHFRWTGLSSVRYEHGANEDEVMLPSFHD. Ser1703 and Ser1719 each carry phosphoserine.

In terms of tissue distribution, expressed in the thymus and cultured bone marrow cells.

It localises to the membrane. In terms of biological role, acts as an endocytic receptor to direct captured antigens from the extracellular space to a specialized antigen-processing compartment. Causes reduced proliferation of B lymphocytes. The sequence is that of Lymphocyte antigen 75 (LY75) from Mesocricetus auratus (Golden hamster).